The primary structure comprises 340 residues: 4-hydroxy-3-methylbut-2-enyl diphosphate reductase (340 aa).

A [4Fe-4S] cluster-binding site is contributed by Cys-18. Residues His-47 and His-83 each coordinate (2E)-4-hydroxy-3-methylbut-2-enyl diphosphate. 2 residues coordinate dimethylallyl diphosphate: His-47 and His-83. Isopentenyl diphosphate contacts are provided by His-47 and His-83. Cys-105 is a [4Fe-4S] cluster binding site. His-133 contacts (2E)-4-hydroxy-3-methylbut-2-enyl diphosphate. A dimethylallyl diphosphate-binding site is contributed by His-133. His-133 serves as a coordination point for isopentenyl diphosphate. The active-site Proton donor is the Glu-135. Position 174 (Thr-174) interacts with (2E)-4-hydroxy-3-methylbut-2-enyl diphosphate. Residue Cys-204 participates in [4Fe-4S] cluster binding. (2E)-4-hydroxy-3-methylbut-2-enyl diphosphate is bound by residues Ser-232, Ser-233, Asn-234, and Ser-277. Positions 232, 233, 234, and 277 each coordinate dimethylallyl diphosphate. The isopentenyl diphosphate site is built by Ser-232, Ser-233, Asn-234, and Ser-277.

The protein belongs to the IspH family. [4Fe-4S] cluster serves as cofactor.

It carries out the reaction isopentenyl diphosphate + 2 oxidized [2Fe-2S]-[ferredoxin] + H2O = (2E)-4-hydroxy-3-methylbut-2-enyl diphosphate + 2 reduced [2Fe-2S]-[ferredoxin] + 2 H(+). The catalysed reaction is dimethylallyl diphosphate + 2 oxidized [2Fe-2S]-[ferredoxin] + H2O = (2E)-4-hydroxy-3-methylbut-2-enyl diphosphate + 2 reduced [2Fe-2S]-[ferredoxin] + 2 H(+). The protein operates within isoprenoid biosynthesis; dimethylallyl diphosphate biosynthesis; dimethylallyl diphosphate from (2E)-4-hydroxy-3-methylbutenyl diphosphate: step 1/1. It participates in isoprenoid biosynthesis; isopentenyl diphosphate biosynthesis via DXP pathway; isopentenyl diphosphate from 1-deoxy-D-xylulose 5-phosphate: step 6/6. Catalyzes the conversion of 1-hydroxy-2-methyl-2-(E)-butenyl 4-diphosphate (HMBPP) into a mixture of isopentenyl diphosphate (IPP) and dimethylallyl diphosphate (DMAPP). Acts in the terminal step of the DOXP/MEP pathway for isoprenoid precursor biosynthesis. The sequence is that of 4-hydroxy-3-methylbut-2-enyl diphosphate reductase from Bartonella quintana (strain Toulouse) (Rochalimaea quintana).